The sequence spans 67 residues: MAAKKGAKTTTKKSDYYKVEGNAVERLKKACPKCGAGVFMAEHLNRFACGKCGYMEYKKNEKTESEE.

Cys31, Cys34, Cys49, and Cys52 together coordinate Zn(2+). A C4-type zinc finger spans residues 31–52 (CPKCGAGVFMAEHLNRFACGKC).

It belongs to the eukaryotic ribosomal protein eS31 family. As to quaternary structure, part of the 30S ribosomal subunit. Zn(2+) serves as cofactor.

This chain is Small ribosomal subunit protein eS31, found in Methanococcus maripaludis (strain C7 / ATCC BAA-1331).